We begin with the raw amino-acid sequence, 118 residues long: Large ribosomal subunit protein uL18 (118 aa).

This sequence belongs to the universal ribosomal protein uL18 family. In terms of assembly, part of the 50S ribosomal subunit; part of the 5S rRNA/L5/L18/L25 subcomplex. Contacts the 5S and 23S rRNAs.

This is one of the proteins that bind and probably mediate the attachment of the 5S RNA into the large ribosomal subunit, where it forms part of the central protuberance. This is Large ribosomal subunit protein uL18 from Rickettsia conorii (strain ATCC VR-613 / Malish 7).